Reading from the N-terminus, the 1010-residue chain is Lethal(2) giant larvae protein homolog SRO77 (1010 aa).

WD repeat units follow at residues 47 to 80, 87 to 122, 127 to 163, 182 to 215, 240 to 275, 299 to 364, 372 to 407, 431 to 504, 518 to 595, 602 to 637, 649 to 700, 709 to 763, 768 to 815, and 829 to 852; these read TVTT…VVFT, IKHM…TTVF, ITCI…KLKI, SIQW…KQHF, VIQS…IHAR, AIFK…QKLF, LINF…ETLI, VTTC…FEVN, KNIS…STVI, VSAI…FNEN, VSTV…DATK, GINS…THAL, IATS…KNLR, and SILE…SVLN. The segment at 932-958 is disordered; that stretch reads SNAARKLPPGTEDHRYARPVRSSGRSN.

It belongs to the WD repeat L(2)GL family. As to quaternary structure, interacts with SEC9.

Functionally, acts as an allosteric regulator of polarized exocytosis by promoting the targeted fusion of vesicles with the plasma membrane. Involved in maintenance of ion homeostasis in cells exposed to NaCl stress. May be involved in the targeting of the myosin proteins to their intrinsic pathways. Multicopy suppressor of RHO3. May also participate in the maintenance of cell polarity and bud growth. The sequence is that of Lethal(2) giant larvae protein homolog SRO77 (SRO77) from Saccharomyces cerevisiae (strain ATCC 204508 / S288c) (Baker's yeast).